The following is a 185-amino-acid chain: Large ribosomal subunit protein uL5 (185 aa).

It belongs to the universal ribosomal protein uL5 family. In terms of assembly, part of the 50S ribosomal subunit; part of the 5S rRNA/L5/L18/L25 subcomplex. Contacts the 5S rRNA and the P site tRNA. Forms a bridge to the 30S subunit in the 70S ribosome.

Its function is as follows. This is one of the proteins that bind and probably mediate the attachment of the 5S RNA into the large ribosomal subunit, where it forms part of the central protuberance. In the 70S ribosome it contacts protein S13 of the 30S subunit (bridge B1b), connecting the 2 subunits; this bridge is implicated in subunit movement. Contacts the P site tRNA; the 5S rRNA and some of its associated proteins might help stabilize positioning of ribosome-bound tRNAs. The chain is Large ribosomal subunit protein uL5 from Rhizobium etli (strain ATCC 51251 / DSM 11541 / JCM 21823 / NBRC 15573 / CFN 42).